We begin with the raw amino-acid sequence, 293 residues long: Proline iminopeptidase (293 aa).

Residues 28–277 (KPLVLLHGGP…YSRHMPFVEE (250 aa)) enclose the AB hydrolase-1 domain. Ser-104 acts as the Nucleophile in catalysis. Residue Asp-244 is part of the active site. His-271 acts as the Proton donor in catalysis.

This sequence belongs to the peptidase S33 family.

The catalysed reaction is Release of N-terminal proline from a peptide.. Releases the N-terminal proline from various substrates. The polypeptide is Proline iminopeptidase (Clostridioides difficile (strain 630) (Peptoclostridium difficile)).